A 454-amino-acid polypeptide reads, in one-letter code: NADP-specific glutamate dehydrogenase (454 aa).

At Ser2 the chain carries N-acetylserine. Residue Lys114 is part of the active site.

Belongs to the Glu/Leu/Phe/Val dehydrogenases family. In terms of assembly, homohexamer.

The catalysed reaction is L-glutamate + NADP(+) + H2O = 2-oxoglutarate + NH4(+) + NADPH + H(+). This is NADP-specific glutamate dehydrogenase (GDH) from Neurospora intermedia.